The chain runs to 421 residues: D-aspartate ligase (421 aa).

Residues tyrosine 130 to valine 332 enclose the ATP-grasp domain. Position 161-224 (proline 161–asparagine 224) interacts with ATP. Residues aspartate 290, glutamate 304, and asparagine 306 each contribute to the Mg(2+) site.

It depends on Mg(2+) as a cofactor.

The catalysed reaction is [beta-GlcNAc-(1-&gt;4)-Mur2Ac(oyl-L-Ala-gamma-D-Glu-L-Lys-D-Ala-D-Ala)](n) + n D-aspartate + n ATP = [beta-GlcNAc-(1-&gt;4)-Mur2Ac(oyl-L-Ala-gamma-D-Glu-6-N-(beta-D-Asp)-L-Lys-D-Ala-D-Ala)]n + n ADP + n phosphate + n H(+). It participates in cell wall biogenesis; peptidoglycan biosynthesis. Functionally, catalyzes the addition of D-aspartate onto the lysine residue in the peptidoglycan precursor UDP-MurNAc-pentapeptide. The ligation occurs between the beta-carboxylate of D-Asp and the epsilon-amino group of L-Lys. Is highly specific for D-aspartate, as L-aspartate, D-glutamate, D-alanine, D-iso-asparagine and D-malate are not substrates. The chain is D-aspartate ligase from Enterococcus faecium (strain Aus0004).